A 447-amino-acid chain; its full sequence is Argininosuccinate synthase (447 aa).

ATP-binding positions include 17–25 (AFSGGLDTS) and Ala43. Tyr99 provides a ligand contact to L-citrulline. 2 residues coordinate ATP: Gly129 and Thr131. Residues Thr131, Asn135, and Asp136 each contribute to the L-aspartate site. An L-citrulline-binding site is contributed by Asn135. Asp136 serves as a coordination point for ATP. L-citrulline is bound by residues Arg139 and Ser192. Asp194 is a binding site for ATP. L-citrulline contacts are provided by Thr201, Glu203, and Glu280.

It belongs to the argininosuccinate synthase family. Type 2 subfamily. Homotetramer.

It localises to the cytoplasm. It carries out the reaction L-citrulline + L-aspartate + ATP = 2-(N(omega)-L-arginino)succinate + AMP + diphosphate + H(+). It functions in the pathway amino-acid biosynthesis; L-arginine biosynthesis; L-arginine from L-ornithine and carbamoyl phosphate: step 2/3. The sequence is that of Argininosuccinate synthase from Escherichia fergusonii (strain ATCC 35469 / DSM 13698 / CCUG 18766 / IAM 14443 / JCM 21226 / LMG 7866 / NBRC 102419 / NCTC 12128 / CDC 0568-73).